Reading from the N-terminus, the 359-residue chain is Molybdenum import ATP-binding protein ModC (359 aa).

Residues 1 to 236 enclose the ABC transporter domain; it reads MNTEIKARFR…IDLPAAFADD (236 aa). 34–41 is an ATP binding site; sequence GHSGSGKT. Residues 294 to 359 form the Mop domain; that stretch reads QSSILNCVSA…AQIKAVALLA (66 aa).

It belongs to the ABC transporter superfamily. Molybdate importer (TC 3.A.1.8) family. The complex is composed of two ATP-binding proteins (ModC), two transmembrane proteins (ModB) and a solute-binding protein (ModA).

The protein resides in the cell inner membrane. The catalysed reaction is molybdate(out) + ATP + H2O = molybdate(in) + ADP + phosphate + H(+). In terms of biological role, part of the ABC transporter complex ModABC involved in molybdenum import. Responsible for energy coupling to the transport system. This chain is Molybdenum import ATP-binding protein ModC, found in Dechloromonas aromatica (strain RCB).